An 88-amino-acid polypeptide reads, in one-letter code: Small ribosomal subunit protein uS17 (88 aa).

Belongs to the universal ribosomal protein uS17 family. In terms of assembly, part of the 30S ribosomal subunit.

Its function is as follows. One of the primary rRNA binding proteins, it binds specifically to the 5'-end of 16S ribosomal RNA. This is Small ribosomal subunit protein uS17 from Hahella chejuensis (strain KCTC 2396).